A 95-amino-acid chain; its full sequence is Large ribosomal subunit protein bL25 (95 aa).

Belongs to the bacterial ribosomal protein bL25 family. In terms of assembly, part of the 50S ribosomal subunit; part of the 5S rRNA/L5/L18/L25 subcomplex. Contacts the 5S rRNA. Binds to the 5S rRNA independently of L5 and L18.

Functionally, this is one of the proteins that binds to the 5S RNA in the ribosome where it forms part of the central protuberance. This is Large ribosomal subunit protein bL25 from Yersinia enterocolitica serotype O:8 / biotype 1B (strain NCTC 13174 / 8081).